Consider the following 164-residue polypeptide: 4-hydroxy-4-methyl-2-oxoglutarate aldolase (164 aa).

Substrate is bound by residues 74-77 (GGNL) and Arg-96. Asp-97 contacts a divalent metal cation.

The protein belongs to the class II aldolase/RraA-like family. Homotrimer. Ni(2+) serves as cofactor. The cofactor is Co(2+). Requires Zn(2+) as cofactor.

The catalysed reaction is 4-hydroxy-4-methyl-2-oxoglutarate = 2 pyruvate. The enzyme catalyses oxaloacetate + H(+) = pyruvate + CO2. Competitively inhibited by oxalate, a pyruvate enolate analog. Functionally, catalyzes the aldol cleavage of 4-hydroxy-4-methyl-2-oxoglutarate (HMG) into 2 molecules of pyruvate. Also contains a secondary oxaloacetate (OAA) decarboxylase activity due to the common pyruvate enolate transition state formed following C-C bond cleavage in the retro-aldol and decarboxylation reactions. The polypeptide is 4-hydroxy-4-methyl-2-oxoglutarate aldolase (Thermus thermophilus (strain ATCC 27634 / DSM 579 / HB8)).